A 295-amino-acid chain; its full sequence is Beta-chimaerin (295 aa).

Residues 41-91 form a Phorbol-ester/DAG-type zinc finger; that stretch reads THNFKVHTFRGPHWCEYCANFMWGLIAQGVRCSDCGLNVHKQCSKHVPNDC. The 192-residue stretch at 104–295 folds into the Rho-GAP domain; sequence CDLTTLVKAH…ILIENEDVLF (192 aa).

Found in cerebellum and testis.

The protein resides in the membrane. Its activity is regulated as follows. In the inactive state, the N terminus protrudes into the active site of the Rho-GAP domain, sterically blocking Rac binding. Phospholipid binding to the Phorbol-ester/DAG-type zinc-finger/C1 domain triggers the cooperative dissociation of these interactions, allowing the N-terminus to move out of the active site and thereby activating the enzyme. GTPase-activating protein for p21-rac. In Rattus norvegicus (Rat), this protein is Beta-chimaerin (Chn2).